Here is a 434-residue protein sequence, read N- to C-terminus: Quinolone resistance transporter (434 aa).

12 consecutive transmembrane segments (helical) span residues 15-35 (LIPA…AVGF), 45-65 (GIGD…YFLF), 85-105 (ILLT…PKSF), 110-130 (FLLG…ITQW), 142-162 (MFVL…GLLL), 175-195 (WLFV…FLWL), 241-261 (VLLL…LNLW), 275-295 (IQIG…LLII), 306-326 (YGHL…SGWL), 333-353 (LAAL…FWTL), 367-387 (IALI…GIGL), and 396-416 (AAGL…TYIV).

The protein belongs to the major facilitator superfamily.

The protein localises to the cell inner membrane. In terms of biological role, efflux pump that mediates resistance to quinolone-type antibiotics. This chain is Quinolone resistance transporter, found in Acinetobacter baumannii.